A 423-amino-acid chain; its full sequence is Serine--tRNA ligase (423 aa).

Residues P107–P130 form a disordered region. Residues S110–R124 show a composition bias toward basic and acidic residues. T231 to E233 serves as a coordination point for L-serine. Residue R262–E264 participates in ATP binding. E285 is a binding site for L-serine. E349 to S352 contacts ATP. S385 contributes to the L-serine binding site.

This sequence belongs to the class-II aminoacyl-tRNA synthetase family. Type-1 seryl-tRNA synthetase subfamily. Homodimer. The tRNA molecule binds across the dimer.

Its subcellular location is the cytoplasm. It catalyses the reaction tRNA(Ser) + L-serine + ATP = L-seryl-tRNA(Ser) + AMP + diphosphate + H(+). The enzyme catalyses tRNA(Sec) + L-serine + ATP = L-seryl-tRNA(Sec) + AMP + diphosphate + H(+). It participates in aminoacyl-tRNA biosynthesis; selenocysteinyl-tRNA(Sec) biosynthesis; L-seryl-tRNA(Sec) from L-serine and tRNA(Sec): step 1/1. Its function is as follows. Catalyzes the attachment of serine to tRNA(Ser). Is also able to aminoacylate tRNA(Sec) with serine, to form the misacylated tRNA L-seryl-tRNA(Sec), which will be further converted into selenocysteinyl-tRNA(Sec). This Coxiella burnetii (strain Dugway 5J108-111) protein is Serine--tRNA ligase.